The sequence spans 582 residues: Guanine nucleotide-binding protein-like NSN1 (582 aa).

The segment covering 1–46 (MVKRSKKSKSKRVTLKQKHKVLKKVKEHHKKKAKDAKKLGLHRKPR) has biased composition (basic residues). Residues 1-58 (MVKRSKKSKSKRVTLKQKHKVLKKVKEHHKKKAKDAKKLGLHRKPRVEKDPGIPNDWP) are disordered. The basic stretch occupies residues 2-49 (VKRSKKSKSKRVTLKQKHKVLKKVKEHHKKKAKDAKKLGLHRKPRVEK). 3 consecutive short sequence motifs (nuclear localization signal) follow at residues 5–12 (SKKSKSKR), 22–29 (LKKVKEHH), and 69–76 (VRRARALE). A coiled-coil region spans residues 15–94 (LKQKHKVLKK…RKERAKKRKL (80 aa)). The 185-residue stretch at 127–311 (YKELVKVIEL…LLDCPGVVML (185 aa)) folds into the CP-type G domain. The DARXP motif signature appears at 145–149 (DARDP). The interval 175–178 (NKID) is G4. 175-178 (NKID) is a binding site for GTP. The segment at 202 to 204 (KCS) is G5. The interval 260–267 (GLPNVGKS) is G1. Residue 263–268 (NVGKSS) participates in GTP binding. Positions 281–456 (VGATPGLTRS…NEFNPVIIPS (176 aa)) are intermediate. Residues 286 to 290 (GLTRS) form a G2 region. GTP is bound by residues 304 to 307 (DCPG) and glycine 307. A G3 region spans residues 304–307 (DCPG). The tract at residues 463-551 (DETMIEDESK…EEDLMDGDYD (89 aa)) is acidic. The segment at 469-545 (DESKTQTEEE…KKAGADEEDL (77 aa)) is disordered. A compositionally biased stretch (acidic residues) spans 476 to 496 (EEEAEHESDDDESMGGEEEEE). Basic and acidic residues predominate over residues 497 to 506 (AGKTKEKSET). Residues 515 to 537 (AAESMLNTKKQKAEKKKRKKAKK) adopt a coiled-coil conformation. The Nuclear localization signal 4 motif lies at 522–529 (TKKQKAEK). Basic residues predominate over residues 523–537 (KKQKAEKKKRKKAKK).

It belongs to the TRAFAC class YlqF/YawG GTPase family. As to quaternary structure, interacts with EBP2 and PES. As to expression, mostly expressed in flowers, siliques and inflorescence apex, and, to a lower extent, in stems and leaves.

The protein localises to the nucleus. It is found in the nucleolus. Its function is as follows. Involved in the differentiation of epidermal cells, probably via the regulation of the expression of meristem-related genes (e.g. CLV3, STM, KNAT1, CUC2 and AG) and of leaf polarity-related genes (e.g. YAB5, FIL, AS2, PHB and PHV). May play a role in regulating cellular proliferation. Necessary for flower development, probably by preventing apical dominance through the down-regulation of AG expression. Required for embryogenesis, leaf and cotyledon development, as well as for leaf polarity establishment. Plays an important role in plant growth and senescence by modulating ribosome biogenesis in nucleolus. Possesses GTPAse activity in vitro. Possesses RNA binding activity in vitro. Associates with ribosomes. The polypeptide is Guanine nucleotide-binding protein-like NSN1 (Arabidopsis thaliana (Mouse-ear cress)).